Consider the following 280-residue polypeptide: Pantothenate synthetase (280 aa).

32 to 39 (MGALHAGH) contributes to the ATP binding site. His-39 functions as the Proton donor in the catalytic mechanism. Gln-63 is a binding site for (R)-pantoate. Position 63 (Gln-63) interacts with beta-alanine. 149-152 (GEKD) lines the ATP pocket. Gln-155 provides a ligand contact to (R)-pantoate. Residues Val-178 and 186 to 189 (MSSR) contribute to the ATP site.

This sequence belongs to the pantothenate synthetase family. In terms of assembly, homodimer.

It localises to the cytoplasm. It catalyses the reaction (R)-pantoate + beta-alanine + ATP = (R)-pantothenate + AMP + diphosphate + H(+). It functions in the pathway cofactor biosynthesis; (R)-pantothenate biosynthesis; (R)-pantothenate from (R)-pantoate and beta-alanine: step 1/1. Catalyzes the condensation of pantoate with beta-alanine in an ATP-dependent reaction via a pantoyl-adenylate intermediate. The polypeptide is Pantothenate synthetase (Ruegeria sp. (strain TM1040) (Silicibacter sp.)).